Here is a 432-residue protein sequence, read N- to C-terminus: Enolase (432 aa).

Gln163 lines the (2R)-2-phosphoglycerate pocket. Glu205 acts as the Proton donor in catalysis. Mg(2+) is bound by residues Asp241, Glu289, and Asp316. (2R)-2-phosphoglycerate contacts are provided by Lys341, Arg370, Ser371, and Lys392. The Proton acceptor role is filled by Lys341.

It belongs to the enolase family. Mg(2+) serves as cofactor.

The protein resides in the cytoplasm. Its subcellular location is the secreted. It is found in the cell surface. It carries out the reaction (2R)-2-phosphoglycerate = phosphoenolpyruvate + H2O. The protein operates within carbohydrate degradation; glycolysis; pyruvate from D-glyceraldehyde 3-phosphate: step 4/5. Functionally, catalyzes the reversible conversion of 2-phosphoglycerate (2-PG) into phosphoenolpyruvate (PEP). It is essential for the degradation of carbohydrates via glycolysis. In Treponema pallidum (strain Nichols), this protein is Enolase.